Here is a 373-residue protein sequence, read N- to C-terminus: SWI/SNF-related matrix-associated actin-dependent regulator of chromatin subfamily B member 1 (373 aa).

The tract at residues methionine 1–serine 101 is DNA-binding.

This sequence belongs to the SNF5 family. As to quaternary structure, component of the multiprotein chromatin-remodeling complexes SWI/SNF. Component of neural progenitors-specific chromatin remodeling complex (npBAF complex) and the neuron-specific chromatin remodeling complex (nBAF complex). Component of the BAF (SWI/SNF) chromatin remodeling complex. Component of the SWI/SNF-B (PBAF) chromatin remodeling complex. Binds to double-stranded DNA.

The protein localises to the nucleus. Functionally, involved in chromatin-remodeling. Core component of the BAF (SWI/SNF) complex. This ATP-dependent chromatin-remodeling complex plays important roles in cell proliferation and differentiation, in cellular antiviral activities and inhibition of tumor formation. Belongs to the neural progenitors-specific chromatin remodeling complex (npBAF complex) and the neuron-specific chromatin remodeling complex (nBAF complex) and may play a role in neural development. The sequence is that of SWI/SNF-related matrix-associated actin-dependent regulator of chromatin subfamily B member 1 (smarcb1) from Dichotomyctere fluviatilis (Green pufferfish).